A 97-amino-acid chain; its full sequence is Citrate lyase acyl carrier protein (97 aa).

Ser-14 is subject to O-(phosphoribosyl dephospho-coenzyme A)serine.

Belongs to the CitD family. In terms of assembly, oligomer with a subunit composition of (alpha,beta,gamma)6.

The protein resides in the cytoplasm. Its function is as follows. Covalent carrier of the coenzyme of citrate lyase. The chain is Citrate lyase acyl carrier protein from Oenococcus oeni (strain ATCC BAA-331 / PSU-1).